Reading from the N-terminus, the 157-residue chain is Small ribosomal subunit protein uS7 (157 aa).

It belongs to the universal ribosomal protein uS7 family. As to quaternary structure, part of the 30S ribosomal subunit. Contacts proteins S9 and S11.

One of the primary rRNA binding proteins, it binds directly to 16S rRNA where it nucleates assembly of the head domain of the 30S subunit. Is located at the subunit interface close to the decoding center, probably blocks exit of the E-site tRNA. In Leptospira biflexa serovar Patoc (strain Patoc 1 / Ames), this protein is Small ribosomal subunit protein uS7.